The chain runs to 1267 residues: MSSMILTQFGPFIESISGITDQSNDVFEDAAKAFSMFTRSDVYKALDEIPFSDDAMLPIPPTIYTKPSHDSYYYIDALNRVRRKTYQGPDDVYVPNCSIVELLEPHETLTSYGRLSEAIENRAKDGDSQARIATTYGRIAESQARQIKAPLEKFVLALLVAEAGGSLYDPVLQKYDEIPDLSHNCPLWCFREICRHISGPLPDRAPYLYLSAGVFWLMSPRMTSAIPPLLSDLVNLAILQQTAGLDPSLVKLGVQICLHAAASSSYSWFILKTKSIFPQNTLHSMYESLEGGYCPNLEWLEPRSDYKFMYMGVMPLSAKYARSAPSNDKKARELGEKYGLSSVVGELRKRTKTYVKHDFASVRYIRDAMACTSGIFLVRTPTETVLQEYTQSPEIKVPIPQKDWTGPIGEIRILKDTTSSIARYLYRTWYLAAARMAAQPRTWDPLFQAIMRSQYVTARGGSGAALRESLYAINVSLPDFKGLPVKAATKIFQAAQLANLPFSHTSVAILADTSMGLRNQVQRRPRSIMPLNVPQQQVSAPHTLTADYINYHMNLSPTSGSAVIEKVIPLGVYASSPPNQSINIDISACDASITWDFFLSVIMAAIHEGVASSSIGKPFMGVPASIVNDESVVGVRAARPISGMQNMIQHLSKLYKRGFSYRVNDSFSPGNDFTHMTTTFPSGSTATSTEHTANNSTMMETFLTVWGPEHTDDPDVLRLMKSLTIQRNYVCQGDDGLMIIDGTTAGKVNSETIQNDLELISKYGEEFGWKYDIAYDGTAEYLKLYFIFGCRIPNLSRHPIVGKERANSSAEEPWPAILDQIMGVFFNGVHDGLQWQRWIRYSWALCCAFSRQRTMIGESVGYLQYPMWSFVYWGLPLVKAFGSDPWIFSWYMPTGDLGMYSWISLIRPLMTRWMVANGYVTDRCSTVFGNADYRRCFNELKLYQGYYMAQLPRNPKKSGRAASREVREQFTQALSDYLMQNPELKSRVLRGRSEWEKYGAGIIHNPPSLFDVPHKWYQGAQEAAIATREELAEMDETLMRARRHSYSSFSKLLEAYLLVKWRMCEAREPSVDLRLPLCAGIDPLNSDPFLKMVSVGPMLQSTRKYFAQTLFMAKTVSGLDVNAIDSALLRLRTLGADKKALTAQLLMVGLQESEADALAGKIMLQDVNTVQLARVVNLAVPDTWMSLDFDSMFKHHVKLLPKDGRHLNTDIPPRMGWLRAILRFLGAGMVMTATGVAVDIYLEDIHGGGRSLGQRFMTWMRQEGRSA.

The region spanning 555 to 792 is the RdRp catalytic domain; sequence LSPTSGSAVI…KLYFIFGCRI (238 aa).

The protein belongs to the reoviridae RNA-directed RNA polymerase family.

The protein localises to the virion. It catalyses the reaction RNA(n) + a ribonucleoside 5'-triphosphate = RNA(n+1) + diphosphate. Functionally, RNA-directed RNA polymerase that is involved in transcription and genome replication. Following infection, it catalyzes the synthesis of fully conservative plus strands. After core assembly, which consists in recruitment of one capped plus-strand for each genomic segments and polymerase complexes, the polymerase switches mode and catalyzes the synthesis of complementary minus-strands. The polypeptide is RNA-directed RNA polymerase lambda-3 (L1) (Reovirus type 3 (strain Dearing) (T3D)).